The sequence spans 158 residues: Large ribosomal subunit protein uL16 (158 aa).

The segment at 1-22 (MLSPKRTKYRKQQRGRMKGKAT) is disordered.

This sequence belongs to the universal ribosomal protein uL16 family. As to quaternary structure, part of the 50S ribosomal subunit.

Its function is as follows. Binds 23S rRNA and is also seen to make contacts with the A and possibly P site tRNAs. The sequence is that of Large ribosomal subunit protein uL16 from Synechococcus sp. (strain JA-3-3Ab) (Cyanobacteria bacterium Yellowstone A-Prime).